The primary structure comprises 212 residues: uncharacterized protein (212 aa).

The signal sequence occupies residues 1–20 (MRRVLLCFLTLILLLPAASA).

This is an uncharacterized protein from Archaeoglobus fulgidus (strain ATCC 49558 / DSM 4304 / JCM 9628 / NBRC 100126 / VC-16).